Consider the following 222-residue polypeptide: Riboflavin kinase (222 aa).

The tract at residues 1–92 is H-T-H motif-like; that stretch reads MVLAEDLECL…CRLFAHEGGH (92 aa). Positions 93-222 are riboflavin kinase; sequence YTLPGIVISG…DRVNVEVAYD (130 aa). 102–107 lines the CDP pocket; sequence GLGEGR. Thr-131 and Asn-133 together coordinate Mg(2+). FMN contacts are provided by Ser-188 and Glu-196. 201 to 204 lines the CDP pocket; the sequence is VGLR.

The protein belongs to the archaeal riboflavin kinase family. Mg(2+) serves as cofactor.

It carries out the reaction riboflavin + CTP = CDP + FMN + H(+). The protein operates within cofactor biosynthesis; FMN biosynthesis; FMN from riboflavin (CTP route): step 1/1. Catalyzes the CTP-dependent phosphorylation of riboflavin (vitamin B2) to form flavin mononucleotide (FMN). The polypeptide is Riboflavin kinase (ribK) (Methanoregula boonei (strain DSM 21154 / JCM 14090 / 6A8)).